The primary structure comprises 91 residues: Small ribosomal subunit protein uS19 (91 aa).

It belongs to the universal ribosomal protein uS19 family.

Functionally, protein S19 forms a complex with S13 that binds strongly to the 16S ribosomal RNA. In Synechococcus sp. (strain CC9605), this protein is Small ribosomal subunit protein uS19.